We begin with the raw amino-acid sequence, 1073 residues long: uncharacterized protein (1073 aa).

Positions 1-36 are cleaved as a signal peptide; the sequence is MAEIIHHSNVFTWAFHVSEYDGAPLLLLGSFSSVAS. N132 is a glycosylation site (N-linked (GlcNAc...) asparagine). 392-399 is an ATP binding site; it reads ATAGIGKS. Residues N544, N632, N703, N732, and N953 are each glycosylated (N-linked (GlcNAc...) asparagine).

This is an uncharacterized protein from Schizosaccharomyces pombe (strain 972 / ATCC 24843) (Fission yeast).